The chain runs to 386 residues: Arginine biosynthesis bifunctional protein ArgJ (386 aa).

6 residues coordinate substrate: threonine 148, lysine 170, threonine 181, glutamate 261, asparagine 381, and serine 386. Threonine 181 serves as the catalytic Nucleophile.

This sequence belongs to the ArgJ family. In terms of assembly, heterotetramer of two alpha and two beta chains.

It localises to the cytoplasm. The catalysed reaction is N(2)-acetyl-L-ornithine + L-glutamate = N-acetyl-L-glutamate + L-ornithine. It catalyses the reaction L-glutamate + acetyl-CoA = N-acetyl-L-glutamate + CoA + H(+). It functions in the pathway amino-acid biosynthesis; L-arginine biosynthesis; L-ornithine and N-acetyl-L-glutamate from L-glutamate and N(2)-acetyl-L-ornithine (cyclic): step 1/1. Its pathway is amino-acid biosynthesis; L-arginine biosynthesis; N(2)-acetyl-L-ornithine from L-glutamate: step 1/4. Its function is as follows. Catalyzes two activities which are involved in the cyclic version of arginine biosynthesis: the synthesis of N-acetylglutamate from glutamate and acetyl-CoA as the acetyl donor, and of ornithine by transacetylation between N(2)-acetylornithine and glutamate. The chain is Arginine biosynthesis bifunctional protein ArgJ from Corynebacterium diphtheriae (strain ATCC 700971 / NCTC 13129 / Biotype gravis).